We begin with the raw amino-acid sequence, 358 residues long: Uroporphyrinogen decarboxylase (358 aa).

Substrate-binding positions include 29 to 33 (RQAGR), phenylalanine 48, aspartate 79, tyrosine 155, serine 210, and histidine 330.

Belongs to the uroporphyrinogen decarboxylase family. Homodimer.

The protein resides in the cytoplasm. The catalysed reaction is uroporphyrinogen III + 4 H(+) = coproporphyrinogen III + 4 CO2. The protein operates within porphyrin-containing compound metabolism; protoporphyrin-IX biosynthesis; coproporphyrinogen-III from 5-aminolevulinate: step 4/4. Functionally, catalyzes the decarboxylation of four acetate groups of uroporphyrinogen-III to yield coproporphyrinogen-III. This chain is Uroporphyrinogen decarboxylase, found in Bordetella parapertussis (strain 12822 / ATCC BAA-587 / NCTC 13253).